A 276-amino-acid polypeptide reads, in one-letter code: MLLCVLKIYIIFCLVNDGAGKRSEVRGRTKTYSHNSRGYFRKERGMGKNKILLVNTKGFDQPHIGQGSFGLVAELFDSTRTDTSRKEPDINKVKLFSTAAHANKSSRNIGIFRRKAFNGSRRNIFSRQPFNKRNTDVTEKPGAKMFWNNFLVKMNGAPQNTSHGGKPQEIMKEACKTLPFTQNIVHENCDRMVIQNNLCFGKCISLHVPNQQDRRNTCAHCLPSKFTLNHLALNCTGSNNVVKVVMMVEECACEAHKNNYHQTAQFNMDASTTLHN.

An N-terminal signal peptide occupies residues Met-1 to Gly-20. Asn-103, Asn-118, and Asn-160 each carry an N-linked (GlcNAc...) asparagine glycan. 4 disulfides stabilise this stretch: Cys-175/Cys-221, Cys-189/Cys-235, Cys-199/Cys-251, and Cys-203/Cys-253. In terms of domain architecture, CTCK spans Cys-175–Asn-259. Asn-234 is a glycosylation site (N-linked (GlcNAc...) asparagine).

It belongs to the DAN family. The long chain interacts with nodal/nr-1, bmp4 and wnt8, thereby inhibiting their function. The short chain interacts with nodal/nr-1 but not bmp4 or wnt8. As to expression, expressed in the anterior endomesoderm of the early gastrula with expression expanded laterally around the margin at the endoderm/mesoderm boundary.

The protein localises to the secreted. In terms of biological role, inhibits wnt, nodal/nr-1 and bmp signaling in the embryo to promote head formation and anterior neural induction. Within the endoderm, acts as an essential mediator of nodal/nr-1-induced cardiogenesis in the overlying mesoderm. This chain is Cerberus, found in Xenopus tropicalis (Western clawed frog).